The primary structure comprises 496 residues: Putative BTB/POZ domain and WD-repeat protein R61 (496 aa).

The region spanning 8–78 is the BTB domain; it reads SNINLILNDE…MFSDIDIYKN (71 aa). 6 WD repeats span residues 149–189, 208–248, 250–285, 291–330, 333–371, and 422–464; these read KFPR…FNSK, IFDN…KEFQ, DYKI…RKVL, KSIG…IIKW, VSKS…KILE, and MYFS…DIIY.

It belongs to the mimivirus BTB/WD family.

This chain is Putative BTB/POZ domain and WD-repeat protein R61, found in Acanthamoeba polyphaga (Amoeba).